The sequence spans 339 residues: 2-deoxy-scyllo-inosamine dehydrogenase (339 aa).

Zn(2+) is bound by residues Cys-37, His-59, Cys-88, Cys-91, Cys-94, Cys-102, and Glu-143.

This sequence belongs to the zinc-containing alcohol dehydrogenase family. DOIA dehydrogenase subfamily. Requires Zn(2+) as cofactor.

The enzyme catalyses 2-deoxy-scyllo-inosamine + NADP(+) = 3-amino-2,3-dideoxy-scyllo-inosose + NADPH + H(+). It carries out the reaction 2-deoxy-scyllo-inosamine + NAD(+) = 3-amino-2,3-dideoxy-scyllo-inosose + NADH + H(+). Its pathway is metabolic intermediate biosynthesis; 2-deoxystreptamine biosynthesis; 2-deoxystreptamine from D-glucose 6-phosphate: step 3/4. It participates in antibiotic biosynthesis; tobramycin biosynthesis. Catalyzes the oxidation of 2-deoxy-scyllo-inosamine (DOIA) with NAD(+) or NADP(+), forming 3-amino-2,3-dideoxy-scyllo-inosose (amino-DOI). This is 2-deoxy-scyllo-inosamine dehydrogenase (tobE) from Streptoalloteichus tenebrarius (strain ATCC 17920 / DSM 40477 / JCM 4838 / CBS 697.72 / NBRC 16177 / NCIMB 11028 / NRRL B-12390 / A12253. 1 / ISP 5477) (Streptomyces tenebrarius).